The chain runs to 618 residues: Sodium/iodide cotransporter (618 aa).

The Extracellular segment spans residues 1–14 (MEGAEAGARATFGA). Residues 15 to 31 (WDYGVFATMLLVSTGIG) traverse the membrane as a helical segment. Topologically, residues 32-56 (LWVGLARGGQRSADDFFTGGRQLAA) are cytoplasmic. A discontinuously helical transmembrane segment spans residues 57-80 (VPVGLSLAASFMSAVQVLGVPAEA). Residues Ser-69, Val-71, and Gln-72 each coordinate Na(+). Val-76 is an iodide binding site. The Extracellular segment spans residues 81-84 (ARYG). The helical transmembrane segment at 85–105 (LKFLWMCAGQLLNSLLTAFLF) threads the bilayer. Met-90 is an iodide binding site. Residues 106–130 (LPIFYRLGLTSTYQYLELRFSRAVR) lie on the Cytoplasmic side of the membrane. A helical transmembrane segment spans residues 131 to 157 (LCGTLQYLVATMLYTGIVIYAPALILN). A Na(+)-binding site is contributed by Tyr-144. Topologically, residues 158–163 (QVTGLD) are extracellular. Residues 164 to 181 (IWASLLSTGIICTLYTTV) traverse the membrane as a helical segment. The Cytoplasmic portion of the chain corresponds to 182–189 (GGMKAVVW). The chain crosses the membrane as a helical span at residues 190–208 (TDVFQVVVMLVGFWVILAR). Residues 209 to 243 (GVILLGGPRNVLSLAQNHSRINLMDFDPDPRSRYT) are Extracellular-facing. Residues 244-266 (FWTFIVGGTLVWLSMYGVNQAQV) traverse the membrane as a discontinuously helical segment. Trp-255 is an iodide binding site. Met-258 serves as a coordination point for Na(+). The Cytoplasmic portion of the chain corresponds to 267-278 (QRYVACHTEGKA). The chain crosses the membrane as a helical span at residues 279–301 (KLALLVNQLGLFLIVASAACCGI). Over 302–335 (VMFVYYKDCDPLLTGRISAPDQYMPLLVLDIFED) the chain is Extracellular. A helical transmembrane segment spans residues 336–363 (LPGVPGLFLACAYSGTLSTASTSINAMA). Residues 364–386 (AVTVEDLIKPRMPGLAPRKLVFI) lie on the Cytoplasmic side of the membrane. Residues 387–408 (SKGLSFIYGSACLTVAALSSLL) form a helical membrane-spanning segment. Residues 409–411 (GGG) lie on the Extracellular side of the membrane. A helical transmembrane segment spans residues 412-437 (VLQGSFTVMGVISGPLLGAFTLGMLL). Leu-413 provides a ligand contact to iodide. Na(+) contacts are provided by Ser-416 and Phe-417. Iodide is bound at residue Phe-417. Topologically, residues 438 to 441 (PACN) are cytoplasmic. Residues 442–465 (TPGVLSGLAAGLAVSLWVAVGATL) traverse the membrane as a helical segment. The Extracellular portion of the chain corresponds to 466–520 (YPPGEQTMGVLPTSAAGCTNDSVLLGPPGATNASNGIPSSGMDTGRPALADTFYA). N-linked (GlcNAc...) asparagine glycosylation is found at Asn-485 and Asn-497. A helical transmembrane segment spans residues 521-545 (ISYLYYGALGTLTTMLCGALISYLT). Over 546–618 (GPTKRSSLGP…YLGHDVETNL (73 aa)) the chain is Cytoplasmic. Phosphoserine; by PKA is present on Ser-551. The segment at 587 to 618 (EDIPAVTKKPPGLKPGAETHPLYLGHDVETNL) is disordered.

The protein belongs to the sodium:solute symporter (SSF) (TC 2.A.21) family. As to quaternary structure, monomer.

The protein resides in the cell membrane. It localises to the cytoplasm. The enzyme catalyses iodide(out) + 2 Na(+)(out) = iodide(in) + 2 Na(+)(in). It catalyses the reaction chlorate(out) + 2 Na(+)(out) = chlorate(in) + 2 Na(+)(in). It carries out the reaction thiocyanate(out) + 2 Na(+)(out) = thiocyanate(in) + 2 Na(+)(in). The catalysed reaction is nitrate(out) + 2 Na(+)(out) = nitrate(in) + 2 Na(+)(in). The enzyme catalyses selenocyanate(out) + 2 Na(+)(out) = selenocyanate(in) + 2 Na(+)(in). Perchlorate inhibits iodide transport activity. Oxyanions inhibit iodide transport activity by blocking the binding sites for iodide and one of the sodium ions. Its function is as follows. Sodium:iodide symporter that mediates the transport of iodide into the thyroid gland. Can also mediate the transport of chlorate, thiocynate, nitrate and selenocynate. The sequence is that of Sodium/iodide cotransporter (Slc5a5) from Rattus norvegicus (Rat).